Here is a 370-residue protein sequence, read N- to C-terminus: Tyrosyl-DNA phosphodiesterase 2 (370 aa).

N-acetylmethionine is present on Met1. The disordered stretch occupies residues 1–32 (MASGSSSDAAEPAGPAGRAASAPEAAQAEEDR). Residues 9–26 (AAEPAGPAGRAASAPEAA) are compositionally biased toward low complexity. Lys34 participates in a covalent cross-link: Glycyl lysine isopeptide (Lys-Gly) (interchain with G-Cter in SUMO2). Thr99 is subject to Phosphothreonine; by ACVR1B. An interaction with 5' end of substrate DNA region spans residues 130 to 134 (NIDGL). The Mg(2+) site is built by Asp132 and Glu162. The interaction with 5' end of substrate DNA stretch occupies residues 236–241 (HLESTR). The active-site Proton donor/acceptor is Asp272. Interaction with 5' end of substrate DNA stretches follow at residues 274-276 (NLR) and 315-321 (LRIPAAY).

This sequence belongs to the CCR4/nocturin family. Interacts with TRAF2, TRAF3, TRAF5, TRAF6, TNFRSF8/CD30, TNFRSF5/CD40, TNFRSF1B/TNF-R75, ETS1, ETS2, FLI1, SMAD3 and ACVR1B/ALK4. It depends on Mg(2+) as a cofactor. Mn(2+) is required as a cofactor. Ubiquitinated by TRAF6. As to expression, widely expressed. Expressed in whole brain, cerebellum, quiescent cortical astrocytes and cerebellar granule neurons.

It is found in the nucleus. It localises to the PML body. Its subcellular location is the nucleolus. The protein localises to the cytoplasm. In terms of biological role, DNA repair enzyme that can remove a variety of covalent adducts from DNA through hydrolysis of a 5'-phosphodiester bond, giving rise to DNA with a free 5' phosphate. Catalyzes the hydrolysis of dead-end complexes between DNA and the topoisomerase 2 (TOP2) active site tyrosine residue. The 5'-tyrosyl DNA phosphodiesterase activity can enable the repair of TOP2-induced DNA double-strand breaks/DSBs without the need for nuclease activity, creating a 'clean' DSB with 5'-phosphate termini that are ready for ligation. Thereby, protects the transcription of many genes involved in neurological development and maintenance from the abortive activity of TOP2. Hydrolyzes 5'-phosphoglycolates on protruding 5' ends on DSBs due to DNA damage by radiation and free radicals. Has preference for single-stranded DNA or duplex DNA with a 4 base pair overhang as substrate. Also has 3'-tyrosyl DNA phosphodiesterase activity, but less efficiently and much slower than TDP1. Constitutes the major if not only 5'-tyrosyl-DNA phosphodiesterase in cells. Also acts as an adapter by participating in the specific activation of MAP3K7/TAK1 in response to TGF-beta: associates with components of the TGF-beta receptor-TRAF6-TAK1 signaling module and promotes their ubiquitination dependent complex formation. Involved in non-canonical TGF-beta induced signaling routes. May also act as a negative regulator of ETS1 and may inhibit NF-kappa-B activation. Acts as a regulator of ribosome biogenesis following stress. The polypeptide is Tyrosyl-DNA phosphodiesterase 2 (Tdp2) (Mus musculus (Mouse)).